A 514-amino-acid polypeptide reads, in one-letter code: Bifunctional purine biosynthesis protein PurH (514 aa).

The MGS-like domain occupies 1–143; the sequence is MTRRALISVS…KNHAGVLVLV (143 aa).

It belongs to the PurH family.

The enzyme catalyses (6R)-10-formyltetrahydrofolate + 5-amino-1-(5-phospho-beta-D-ribosyl)imidazole-4-carboxamide = 5-formamido-1-(5-phospho-D-ribosyl)imidazole-4-carboxamide + (6S)-5,6,7,8-tetrahydrofolate. It catalyses the reaction IMP + H2O = 5-formamido-1-(5-phospho-D-ribosyl)imidazole-4-carboxamide. The protein operates within purine metabolism; IMP biosynthesis via de novo pathway; 5-formamido-1-(5-phospho-D-ribosyl)imidazole-4-carboxamide from 5-amino-1-(5-phospho-D-ribosyl)imidazole-4-carboxamide (10-formyl THF route): step 1/1. Its pathway is purine metabolism; IMP biosynthesis via de novo pathway; IMP from 5-formamido-1-(5-phospho-D-ribosyl)imidazole-4-carboxamide: step 1/1. This chain is Bifunctional purine biosynthesis protein PurH, found in Deinococcus geothermalis (strain DSM 11300 / CIP 105573 / AG-3a).